We begin with the raw amino-acid sequence, 114 residues long: MAVNLYDHANQLEQALRESDEYQAIQNAYAKVKENQESKDLFDEFRETQLSFQQKQMQGEEIGEEELQKAQEQAQKIENDSNISELMAAEQNMSQVFQEINQIIVKPLDEIYAD.

This sequence belongs to the UPF0342 family.

In Staphylococcus saprophyticus subsp. saprophyticus (strain ATCC 15305 / DSM 20229 / NCIMB 8711 / NCTC 7292 / S-41), this protein is UPF0342 protein SSP0954.